Here is a 268-residue protein sequence, read N- to C-terminus: Lipase 1 (268 aa).

A signal peptide spans 1–29 (MRRFRLVGFLSSLVLAAGAALTGAATAQA). Residue serine 44 is the Nucleophile of the active site. 3 disulfide bridges follow: cysteine 61/cysteine 86, cysteine 127/cysteine 135, and cysteine 185/cysteine 231. Histidine 250 is a catalytic residue.

This sequence belongs to the 'GDSL' lipolytic enzyme family. As to quaternary structure, monomer.

Its subcellular location is the secreted. It carries out the reaction a triacylglycerol + H2O = a diacylglycerol + a fatty acid + H(+). With respect to regulation, strongly inhibited by Ag(+). The cations Ca(2+), Mg(2+), Co(2+) and Cu(2+) do not significantly reduce the lipolytic activity of SCO1725. Is also inhibited by DTT in vitro, but not by EDTA or by the reagent masking SH-groups, p-hydroxymercuribenzoate (pHMB). Is resistant to PMSF inhibition, except in the presence of Ca(2+). Is also strongly inhibited by 3,4-dichloroisocoumarin (DCI), another inhibitor of serine hydrolases. Addition of tetrahydrofuran and 1,4-dioxane significantly increases (2- and 4- fold, respectively) hydrolytic activity of lipase towards p-nitrophenyl caprylate. In terms of biological role, catalyzes the hydrolysis of fatty acid esters with a preference for mid-length acyl chain (C10-C16). Is able to hydrolyze the triacylglycerol triolein and mixed triacylglycerols from a wide range of natural oils; better activity is obtained with corn-, wheat germ- and olive oil that have higher content of linoleic and/or oleic acid (C18:2; C18:1, cis). Tween detergents are also substrates for this enzyme. Displays arylesterase activity towards p-nitrophenyl alkanoate esters and alpha- and beta-naphthyl esters. This Streptomyces coelicolor (strain ATCC BAA-471 / A3(2) / M145) protein is Lipase 1.